The following is a 244-amino-acid chain: NAD(P)H-quinone oxidoreductase subunit K (244 aa).

[4Fe-4S] cluster is bound by residues Cys-60, Cys-61, Cys-125, and Cys-156. Positions 213–244 (KSEKSIESSKLNPVEESSENIYETNSIDEVIK) are disordered. Over residues 231–244 (ENIYETNSIDEVIK) the composition is skewed to polar residues.

This sequence belongs to the complex I 20 kDa subunit family. In terms of assembly, NDH-1 can be composed of about 15 different subunits; different subcomplexes with different compositions have been identified which probably have different functions. Requires [4Fe-4S] cluster as cofactor.

The protein resides in the cellular thylakoid membrane. The enzyme catalyses a plastoquinone + NADH + (n+1) H(+)(in) = a plastoquinol + NAD(+) + n H(+)(out). It carries out the reaction a plastoquinone + NADPH + (n+1) H(+)(in) = a plastoquinol + NADP(+) + n H(+)(out). In terms of biological role, NDH-1 shuttles electrons from an unknown electron donor, via FMN and iron-sulfur (Fe-S) centers, to quinones in the respiratory and/or the photosynthetic chain. The immediate electron acceptor for the enzyme in this species is believed to be plastoquinone. Couples the redox reaction to proton translocation, and thus conserves the redox energy in a proton gradient. Cyanobacterial NDH-1 also plays a role in inorganic carbon-concentration. In Prochlorococcus marinus subsp. pastoris (strain CCMP1986 / NIES-2087 / MED4), this protein is NAD(P)H-quinone oxidoreductase subunit K.